A 100-amino-acid polypeptide reads, in one-letter code: MKLTPREKDKLLIFTAALLAERRRARGLKLNYPEAVAFITAALMEAARDGKTVAEVMHYGTTLLTRDDVMDGVPEMIPDIQVEATFPDGTKLVTVHHPIP.

The protein belongs to the urease gamma subunit family. In terms of assembly, heterotrimer of UreA (gamma), UreB (beta) and UreC (alpha) subunits. Three heterotrimers associate to form the active enzyme.

Its subcellular location is the cytoplasm. It carries out the reaction urea + 2 H2O + H(+) = hydrogencarbonate + 2 NH4(+). Its pathway is nitrogen metabolism; urea degradation; CO(2) and NH(3) from urea (urease route): step 1/1. The protein is Urease subunit gamma of Burkholderia ambifaria (strain MC40-6).